We begin with the raw amino-acid sequence, 450 residues long: Tyrosine-protein kinase CSK (450 aa).

At Ser2 the chain carries N-acetylserine. In terms of domain architecture, SH3 spans 9-70; sequence PSGTECIAKY…PANYVQKREG (62 aa). Residues 9–70 are interaction with PTPN22; the sequence is PSGTECIAKY…PANYVQKREG (62 aa). Positions 82–171 constitute an SH2 domain; sequence WFHGKITREQ…GLCTRLIKPK (90 aa). Tyr184 carries the post-translational modification Phosphotyrosine. In terms of domain architecture, Protein kinase spans 195–449; sequence LKLLQTIGKG…LEHIKTHELH (255 aa). Residues 201 to 209 and Lys222 contribute to the ATP site; that span reads IGKGEFGDV. Tyr304 is subject to Phosphotyrosine. Catalysis depends on Asp314, which acts as the Proton acceptor. Ser364 is modified (phosphoserine; by PKA). Tyr416 is modified (phosphotyrosine; by autocatalysis).

Belongs to the protein kinase superfamily. Tyr protein kinase family. CSK subfamily. In terms of assembly, homodimer (via SH3-domain). Interacts with PTPN22. Interacts with phosphorylated SIT1, PAG1, LIME1 and TGFB1I1; these interactions serve to recruit CSK to the membrane where it can phosphorylate and inhibit Src-family kinases. Interacts with SRCIN1. Interacts with RHOH. Interacts (via SH2 domain) with SCIMP; this interaction is dependent on phosphorylation of SCIMP 'Tyr-107'. Interacts (via SH2 domain) with PRAG1 (when phosphorylated at 'Tyr-391'); this interaction prevents translocation of CSK from the cytoplasm to the membrane leading to increased activity of CSK. Interacts with LRRK1. Mg(2+) is required as a cofactor. Requires Mn(2+) as cofactor. Phosphorylated at Ser-364 by PKA, leading to increased activity. Autophosphorylated. As to expression, expressed in lung and macrophages.

It localises to the cytoplasm. The protein localises to the cell membrane. It carries out the reaction L-tyrosyl-[protein] + ATP = O-phospho-L-tyrosyl-[protein] + ADP + H(+). In terms of biological role, non-receptor tyrosine-protein kinase that plays an important role in the regulation of cell growth, differentiation, migration and immune response. Phosphorylates tyrosine residues located in the C-terminal tails of Src-family kinases (SFKs) including LCK, SRC, HCK, FYN, LYN, CSK or YES1. Upon tail phosphorylation, Src-family members engage in intramolecular interactions between the phosphotyrosine tail and the SH2 domain that result in an inactive conformation. To inhibit SFKs, CSK is recruited to the plasma membrane via binding to transmembrane proteins or adapter proteins located near the plasma membrane. Suppresses signaling by various surface receptors, including T-cell receptor (TCR) and B-cell receptor (BCR) by phosphorylating and maintaining inactive several positive effectors such as FYN or LCK. The protein is Tyrosine-protein kinase CSK (CSK) of Homo sapiens (Human).